The chain runs to 478 residues: Methionine aminopeptidase 2 (478 aa).

The disordered stretch occupies residues 1–122; it reads MAGVEEVAAS…TDPPSVPICD (122 aa). At A2 the chain carries N-acetylalanine. Basic residues predominate over residues 36-46; it reads KKKRRKKKKSK. S45 is subject to Phosphoserine. The segment covering 55-79 has biased composition (basic and acidic residues); that stretch reads EPDKESGASVDEVARQLERSALEDK. Phosphoserine; alternate occurs at positions 60 and 63. Residues S60 and S63 are each glycosylated (O-linked (GlcNAc) serine; alternate). The residue at position 74 (S74) is a Phosphoserine. The segment covering 80 to 92 has biased composition (acidic residues); sequence ERDEDDEDGDGDG. Positions 97 to 109 are enriched in basic residues; that stretch reads GKKKKKKKKKRGP. A substrate-binding site is contributed by H231. Positions 251, 262, and 331 each coordinate a divalent metal cation. H339 contributes to the substrate binding site. A divalent metal cation is bound by residues E364 and E459.

It belongs to the peptidase M24A family. Methionine aminopeptidase eukaryotic type 2 subfamily. Interacts strongly with the eIF-2 gamma-subunit EIF2S3. Binds EIF2S1 at low magnesium concentrations. Co(2+) is required as a cofactor. Requires Zn(2+) as cofactor. It depends on Mn(2+) as a cofactor. The cofactor is Fe(2+). Post-translationally, contains approximately 12 O-linked N-acetylglucosamine (GlcNAc) residues. O-glycosylation is required for EIF2S1 binding.

The protein localises to the cytoplasm. It catalyses the reaction Release of N-terminal amino acids, preferentially methionine, from peptides and arylamides.. Functionally, cotranslationally removes the N-terminal methionine from nascent proteins. The N-terminal methionine is often cleaved when the second residue in the primary sequence is small and uncharged (Met-Ala-, Cys, Gly, Pro, Ser, Thr, or Val). The catalytic activity of human METAP2 toward Met-Val peptides is consistently two orders of magnitude higher than that of METAP1, suggesting that it is responsible for processing proteins containing N-terminal Met-Val and Met-Thr sequences in vivo. Protects eukaryotic initiation factor EIF2S1 from translation-inhibiting phosphorylation by inhibitory kinases such as EIF2AK2/PKR and EIF2AK1/HCR. Plays a critical role in the regulation of protein synthesis. The sequence is that of Methionine aminopeptidase 2 from Homo sapiens (Human).